Consider the following 320-residue polypeptide: Aspartate carbamoyltransferase catalytic subunit (320 aa).

2 residues coordinate carbamoyl phosphate: arginine 53 and threonine 54. Lysine 82 contributes to the L-aspartate binding site. Residues arginine 103, histidine 131, and glutamine 134 each coordinate carbamoyl phosphate. 2 residues coordinate L-aspartate: arginine 164 and arginine 227. Carbamoyl phosphate-binding residues include leucine 266 and proline 267.

The protein belongs to the aspartate/ornithine carbamoyltransferase superfamily. ATCase family. Heterododecamer (2C3:3R2) of six catalytic PyrB chains organized as two trimers (C3), and six regulatory PyrI chains organized as three dimers (R2).

It catalyses the reaction carbamoyl phosphate + L-aspartate = N-carbamoyl-L-aspartate + phosphate + H(+). It participates in pyrimidine metabolism; UMP biosynthesis via de novo pathway; (S)-dihydroorotate from bicarbonate: step 2/3. Its function is as follows. Catalyzes the condensation of carbamoyl phosphate and aspartate to form carbamoyl aspartate and inorganic phosphate, the committed step in the de novo pyrimidine nucleotide biosynthesis pathway. This Bifidobacterium adolescentis (strain ATCC 15703 / DSM 20083 / NCTC 11814 / E194a) protein is Aspartate carbamoyltransferase catalytic subunit.